The sequence spans 234 residues: Sugar fermentation stimulation protein A (234 aa).

The H-T-H motif DNA-binding region spans 201–220; that stretch reads LLSEAQQRGVEILAYKAEIS.

The protein belongs to the SfsA family.

Functionally, binds to DNA non-specifically. Could be a regulatory factor involved in maltose metabolism. The chain is Sugar fermentation stimulation protein A from Shigella flexneri.